A 223-amino-acid polypeptide reads, in one-letter code: DNA mismatch repair protein MutH (223 aa).

This sequence belongs to the MutH family.

It localises to the cytoplasm. Its function is as follows. Sequence-specific endonuclease that cleaves unmethylated GATC sequences. It is involved in DNA mismatch repair. This Shewanella oneidensis (strain ATCC 700550 / JCM 31522 / CIP 106686 / LMG 19005 / NCIMB 14063 / MR-1) protein is DNA mismatch repair protein MutH.